Here is a 367-residue protein sequence, read N- to C-terminus: GTP cyclohydrolase FolE2 (367 aa).

It belongs to the GTP cyclohydrolase IV family.

It carries out the reaction GTP + H2O = 7,8-dihydroneopterin 3'-triphosphate + formate + H(+). It participates in cofactor biosynthesis; 7,8-dihydroneopterin triphosphate biosynthesis; 7,8-dihydroneopterin triphosphate from GTP: step 1/1. Its function is as follows. Converts GTP to 7,8-dihydroneopterin triphosphate. The sequence is that of GTP cyclohydrolase FolE2 from Ruegeria pomeroyi (strain ATCC 700808 / DSM 15171 / DSS-3) (Silicibacter pomeroyi).